Here is a 128-residue protein sequence, read N- to C-terminus: Sulfurtransferase TusD (128 aa).

Catalysis depends on Cys78, which acts as the Cysteine persulfide intermediate.

Belongs to the DsrE/TusD family. As to quaternary structure, heterohexamer, formed by a dimer of trimers. The hexameric TusBCD complex contains 2 copies each of TusB, TusC and TusD. The TusBCD complex interacts with TusE.

It localises to the cytoplasm. Functionally, part of a sulfur-relay system required for 2-thiolation of 5-methylaminomethyl-2-thiouridine (mnm(5)s(2)U) at tRNA wobble positions. Accepts sulfur from TusA and transfers it in turn to TusE. This Salmonella agona (strain SL483) protein is Sulfurtransferase TusD.